A 454-amino-acid polypeptide reads, in one-letter code: Bifunctional protein GlmU (454 aa).

Positions 1–226 (MSLEIVILAA…AMEVQGVNDR (226 aa)) are pyrophosphorylase. UDP-N-acetyl-alpha-D-glucosamine is bound by residues 8-11 (LAAG), Lys22, Gln73, 78-79 (GT), 99-101 (YGD), Gly136, Glu151, Asn166, and Asn224. Mg(2+) is bound at residue Asp101. Position 224 (Asn224) interacts with Mg(2+). The interval 227-247 (MQQAQLERHYQRLRAEELMRQ) is linker. Positions 248 to 454 (GVTLLDPQRL…NWKRPEKIKK (207 aa)) are N-acetyltransferase. UDP-N-acetyl-alpha-D-glucosamine is bound by residues Arg330 and Lys348. The active-site Proton acceptor is the His360. The UDP-N-acetyl-alpha-D-glucosamine site is built by Tyr363 and Asn374. Residues Ala377, 383–384 (NY), Ser402, Ala420, and Arg437 each bind acetyl-CoA.

In the N-terminal section; belongs to the N-acetylglucosamine-1-phosphate uridyltransferase family. This sequence in the C-terminal section; belongs to the transferase hexapeptide repeat family. In terms of assembly, homotrimer. Mg(2+) serves as cofactor.

The protein localises to the cytoplasm. The enzyme catalyses alpha-D-glucosamine 1-phosphate + acetyl-CoA = N-acetyl-alpha-D-glucosamine 1-phosphate + CoA + H(+). It carries out the reaction N-acetyl-alpha-D-glucosamine 1-phosphate + UTP + H(+) = UDP-N-acetyl-alpha-D-glucosamine + diphosphate. Its pathway is nucleotide-sugar biosynthesis; UDP-N-acetyl-alpha-D-glucosamine biosynthesis; N-acetyl-alpha-D-glucosamine 1-phosphate from alpha-D-glucosamine 6-phosphate (route II): step 2/2. It participates in nucleotide-sugar biosynthesis; UDP-N-acetyl-alpha-D-glucosamine biosynthesis; UDP-N-acetyl-alpha-D-glucosamine from N-acetyl-alpha-D-glucosamine 1-phosphate: step 1/1. It functions in the pathway bacterial outer membrane biogenesis; LPS lipid A biosynthesis. Functionally, catalyzes the last two sequential reactions in the de novo biosynthetic pathway for UDP-N-acetylglucosamine (UDP-GlcNAc). The C-terminal domain catalyzes the transfer of acetyl group from acetyl coenzyme A to glucosamine-1-phosphate (GlcN-1-P) to produce N-acetylglucosamine-1-phosphate (GlcNAc-1-P), which is converted into UDP-GlcNAc by the transfer of uridine 5-monophosphate (from uridine 5-triphosphate), a reaction catalyzed by the N-terminal domain. This Pseudomonas aeruginosa (strain LESB58) protein is Bifunctional protein GlmU.